The chain runs to 276 residues: UPF0328 protein ECU04_0100 (276 aa).

A disordered region spans residues 1 to 24 (MGIIDVQRSHLTATPSKERDAPAH).

This sequence belongs to the UPF0328 family.

The chain is UPF0328 protein ECU04_0100 from Encephalitozoon cuniculi (strain GB-M1) (Microsporidian parasite).